The chain runs to 204 residues: 3,4-dihydroxy-2-butanone 4-phosphate synthase (204 aa).

Glu30 provides a ligand contact to Mg(2+). Asp34 contributes to the D-ribulose 5-phosphate binding site. An S-glutathionyl cysteine modification is found at Cys59. D-ribulose 5-phosphate is bound by residues Thr85 and 142 to 146 (RRGHT). His145 provides a ligand contact to Mg(2+).

Homodimer. Mg(2+) serves as cofactor. The cofactor is Mn(2+). In terms of processing, S-glutathionylation is reversible and dependent on a glutaredoxin.

The enzyme catalyses D-ribulose 5-phosphate = (2S)-2-hydroxy-3-oxobutyl phosphate + formate + H(+). It participates in cofactor biosynthesis; riboflavin biosynthesis; 2-hydroxy-3-oxobutyl phosphate from D-ribulose 5-phosphate: step 1/1. In terms of biological role, catalyzes the conversion of D-ribulose 5-phosphate to formate and 3,4-dihydroxy-2-butanone 4-phosphate. The sequence is that of 3,4-dihydroxy-2-butanone 4-phosphate synthase (RIB3) from Candida albicans (strain SC5314 / ATCC MYA-2876) (Yeast).